A 61-amino-acid polypeptide reads, in one-letter code: Large ribosomal subunit protein bL28 (61 aa).

This sequence belongs to the bacterial ribosomal protein bL28 family.

The chain is Large ribosomal subunit protein bL28 from Lactobacillus johnsonii (strain CNCM I-12250 / La1 / NCC 533).